Reading from the N-terminus, the 941-residue chain is Ankyrin repeat and MYND domain-containing protein 1 (941 aa).

3 MORN repeats span residues 2–24, 25–47, and 70–92; these read YQGE…TGES, YHGQ…DGSS, and FQGL…DGSQ. ANK repeat units follow at residues 292–321, 513–542, 545–574, 581–613, 657–691, 694–723, and 737–766; these read KGYT…DVNK, MRRM…DPNL, VPMQ…RTDI, STLT…DVDA, GGRT…NPNL, SGHS…DPNL, and CDLT…DILK. C880, C883, C894, C897, C903, C907, H916, and C920 together coordinate Zn(2+). The MYND-type zinc finger occupies 880–920; the sequence is CYQCGRSIGVRLLPCPRCYGILTCSKYCKTKAWTEFHKKDC.

This Homo sapiens (Human) protein is Ankyrin repeat and MYND domain-containing protein 1 (ANKMY1).